The following is a 203-amino-acid chain: Eukaryotic translation initiation factor isoform 4E (203 aa).

A compositionally biased stretch (low complexity) spans 1 to 25 (MATETAGAVVESSSAATVPSPAPEA). The segment at 1 to 27 (MATETAGAVVESSSAATVPSPAPEAGS) is disordered. MRNA-binding positions include 47-52 (QGAAWG), lysine 79, and 97-98 (WE). A disulfide bridge connects residues cysteine 102 and cysteine 141. 148 to 153 (RQRQDK) serves as a coordination point for mRNA.

The protein belongs to the eukaryotic initiation factor 4E family. As to quaternary structure, EIF4F is a multi-subunit complex, the composition of which varies with external and internal environmental conditions. It is composed of at least EIF4A, EIF4E and EIF4G. EIF4E is also known to interact with other partners. In higher plants two isoforms of EIF4F have been identified, named isoform EIF4F and isoform EIF(iso)4F. Isoform EIF4F has subunits p220 and p26, whereas isoform EIF(iso)4F has subunits p82 and p28. (Microbial infection) Interacts with the potyvirus peanut stripe virus (PStV) helper component proteinase (HC-Pro) in the cytoplasm and with PStV viral genome-linked protein (VPg) in the nucleus; these interactions are possible in susceptible hosts but impaired in resistant plants. In terms of processing, according to the redox status, the Cys-102-Cys-141 disulfide bridge may have a role in regulating protein function by affecting its ability to bind capped mRNA. As to expression, expressed ubiquitously with highest levels in young leaves and roots, and lowest levels in flowers.

The protein localises to the cytoplasm. Its subcellular location is the nucleus. Functionally, component of the protein complex eIF4F, which is involved in the recognition of the mRNA cap, ATP-dependent unwinding of 5'-terminal secondary structure and recruitment of mRNA to the ribosome. Recognizes and binds the 7-methylguanosine-containing mRNA cap during an early step in the initiation of protein synthesis and facilitates ribosome binding by inducing the unwinding of the mRNAs secondary structures. Key component of recessive resistance to potyviruses such as peanut stripe virus (PStV). In terms of biological role, (Microbial infection) Susceptibility host factor required for viral infection by recruiting viral RNAs to the host ribosomal complex via an interaction with viral genome-linked protein (VPg). In Arachis hypogaea (Peanut), this protein is Eukaryotic translation initiation factor isoform 4E.